A 198-amino-acid polypeptide reads, in one-letter code: Pyridoxal 5'-phosphate synthase subunit PdxT (198 aa).

49 to 51 (GES) contributes to the L-glutamine binding site. C81 acts as the Nucleophile in catalysis. Residues R113 and 141-142 (IR) contribute to the L-glutamine site. Catalysis depends on charge relay system residues H177 and E179.

This sequence belongs to the glutaminase PdxT/SNO family. As to quaternary structure, in the presence of PdxS, forms a dodecamer of heterodimers. Only shows activity in the heterodimer.

The enzyme catalyses aldehydo-D-ribose 5-phosphate + D-glyceraldehyde 3-phosphate + L-glutamine = pyridoxal 5'-phosphate + L-glutamate + phosphate + 3 H2O + H(+). The catalysed reaction is L-glutamine + H2O = L-glutamate + NH4(+). Its pathway is cofactor biosynthesis; pyridoxal 5'-phosphate biosynthesis. In terms of biological role, catalyzes the hydrolysis of glutamine to glutamate and ammonia as part of the biosynthesis of pyridoxal 5'-phosphate. The resulting ammonia molecule is channeled to the active site of PdxS. The sequence is that of Pyridoxal 5'-phosphate synthase subunit PdxT from Mycobacterium ulcerans (strain Agy99).